We begin with the raw amino-acid sequence, 803 residues long: Protein translocase subunit SecA (803 aa).

ATP contacts are provided by residues Q100, 118–122, and D508; that span reads GEGKT.

It belongs to the SecA family. Monomer and homodimer. Part of the essential Sec protein translocation apparatus which comprises SecA, SecYEG and auxiliary proteins SecDF. Other proteins may also be involved.

Its subcellular location is the cell membrane. It localises to the cytoplasm. It catalyses the reaction ATP + H2O + cellular proteinSide 1 = ADP + phosphate + cellular proteinSide 2.. Its function is as follows. Part of the Sec protein translocase complex. Interacts with the SecYEG preprotein conducting channel. Has a central role in coupling the hydrolysis of ATP to the transfer of proteins into and across the cell membrane, serving as an ATP-driven molecular motor driving the stepwise translocation of polypeptide chains across the membrane. The polypeptide is Protein translocase subunit SecA (Leuconostoc mesenteroides subsp. mesenteroides (strain ATCC 8293 / DSM 20343 / BCRC 11652 / CCM 1803 / JCM 6124 / NCDO 523 / NBRC 100496 / NCIMB 8023 / NCTC 12954 / NRRL B-1118 / 37Y)).